Here is a 291-residue protein sequence, read N- to C-terminus: Tyrosine isonitrile desaturase (291 aa).

Fe cation contacts are provided by histidine 110, aspartate 112, and histidine 259.

The protein belongs to the TfdA dioxygenase family. Homotrimer in solution. Requires Fe(2+) as cofactor.

The catalysed reaction is (2S)-3-(4-hydroxyphenyl)-2-isocyanopropanoate + 2-oxoglutarate + O2 = (2E)-3-(4-hydroxyphenyl)-2-isocyanoprop-2-enoate + succinate + CO2 + H2O. Involved in the biosynthesis of paerucumarin, a cyclized isocyano derivative of tyrosine. Catalyzes the 2-oxoglutarate-dependent oxidation of tyrosine isonitrile. In Pseudomonas aeruginosa (strain ATCC 15692 / DSM 22644 / CIP 104116 / JCM 14847 / LMG 12228 / 1C / PRS 101 / PAO1), this protein is Tyrosine isonitrile desaturase.